The sequence spans 366 residues: Ribosomal RNA large subunit methyltransferase M (366 aa).

Residues Ser188, 221 to 224, Asp240, Asp260, and Asp277 each bind S-adenosyl-L-methionine; that span reads CPGG. Lys306 functions as the Proton acceptor in the catalytic mechanism.

This sequence belongs to the class I-like SAM-binding methyltransferase superfamily. RNA methyltransferase RlmE family. RlmM subfamily. Monomer.

It localises to the cytoplasm. It carries out the reaction cytidine(2498) in 23S rRNA + S-adenosyl-L-methionine = 2'-O-methylcytidine(2498) in 23S rRNA + S-adenosyl-L-homocysteine + H(+). Functionally, catalyzes the 2'-O-methylation at nucleotide C2498 in 23S rRNA. In Musicola paradisiaca (strain Ech703) (Dickeya paradisiaca), this protein is Ribosomal RNA large subunit methyltransferase M.